The chain runs to 244 residues: MGALGLEGRGGRLQGRGSLLLAVAGATSLVTLLLAVPITVLAVLALVPQDQGGLVTETADPGAQAQQGLGFQKLPEEEPETDLSPGLPAAHLIGAPLKGQGLGWETTKEQAFLTSGTQFSDAEGLALPQDGLYYLYCLVGYRGRTPPGGGDPQGRSVTLRSSLYRAGGAYGPGTPELLLEGAETVTPVLDPARRQGYGPLWYTSVGFGGLVQLRRGERVYVNISHPDMVDFARGKTFFGAVMVG.

The Cytoplasmic portion of the chain corresponds to 1 to 18; it reads MGALGLEGRGGRLQGRGS. A helical; Signal-anchor for type II membrane protein transmembrane segment spans residues 19–48; sequence LLLAVAGATSLVTLLLAVPITVLAVLALVP. Residues 49-244 lie on the Extracellular side of the membrane; that stretch reads QDQGGLVTET…KTFFGAVMVG (196 aa). The region spanning 88–243 is the THD domain; the sequence is PAAHLIGAPL…GKTFFGAVMV (156 aa). N-linked (GlcNAc...) asparagine glycosylation occurs at Asn222.

The protein belongs to the tumor necrosis factor family. As to quaternary structure, heterotrimer of either two LTB and one LTA subunits or (less prevalent) two LTA and one LTB subunits.

The protein localises to the membrane. Cytokine that binds to LTBR/TNFRSF3. May play a specific role in immune response regulation. Provides the membrane anchor for the attachment of the heterotrimeric complex to the cell surface. This chain is Lymphotoxin-beta (LTB), found in Pan troglodytes (Chimpanzee).